The primary structure comprises 353 residues: 3-dehydroquinate synthase (353 aa).

NAD(+) is bound by residues 61 to 66 (DGEEAK), 119 to 120 (TT), Lys132, and Lys141. Residues Glu174, His238, and His254 each coordinate Zn(2+).

Belongs to the sugar phosphate cyclases superfamily. Dehydroquinate synthase family. The cofactor is Co(2+). Zn(2+) serves as cofactor. It depends on NAD(+) as a cofactor.

The protein resides in the cytoplasm. It catalyses the reaction 7-phospho-2-dehydro-3-deoxy-D-arabino-heptonate = 3-dehydroquinate + phosphate. It functions in the pathway metabolic intermediate biosynthesis; chorismate biosynthesis; chorismate from D-erythrose 4-phosphate and phosphoenolpyruvate: step 2/7. Functionally, catalyzes the conversion of 3-deoxy-D-arabino-heptulosonate 7-phosphate (DAHP) to dehydroquinate (DHQ). In Sulfolobus acidocaldarius (strain ATCC 33909 / DSM 639 / JCM 8929 / NBRC 15157 / NCIMB 11770), this protein is 3-dehydroquinate synthase.